The primary structure comprises 422 residues: 3-carboxy-cis,cis-muconate cycloisomerase (422 aa).

The protein belongs to the class-II fumarase/aspartase family. As to quaternary structure, homotetramer.

The protein resides in the cytoplasm. It catalyses the reaction 2-(carboxymethyl)-5-oxo-2,5-dihydro-2-furoate = 3-carboxy-cis,cis-muconate + H(+). It participates in aromatic compound metabolism; beta-ketoadipate pathway; 5-oxo-4,5-dihydro-2-furylacetate from 3-carboxy-cis,cis-muconate: step 1/2. Functionally, catalyzes an anti cycloisomerization. This Pseudomonas putida (Arthrobacter siderocapsulatus) protein is 3-carboxy-cis,cis-muconate cycloisomerase (pcaB).